Reading from the N-terminus, the 96-residue chain is Small ribosomal subunit protein bS18 (96 aa).

Residues 1-18 (MPPPRGKGRFGKDKRPKR) are compositionally biased toward basic residues. The interval 1–21 (MPPPRGKGRFGKDKRPKRNTQ) is disordered.

It belongs to the bacterial ribosomal protein bS18 family. Part of the 30S ribosomal subunit. Forms a tight heterodimer with protein bS6.

In terms of biological role, binds as a heterodimer with protein bS6 to the central domain of the 16S rRNA, where it helps stabilize the platform of the 30S subunit. This chain is Small ribosomal subunit protein bS18, found in Methylibium petroleiphilum (strain ATCC BAA-1232 / LMG 22953 / PM1).